The primary structure comprises 279 residues: Large ribosomal subunit protein uL2 (279 aa).

Disordered stretches follow at residues 29–49 and 202–279; these read PVKQLTEGKSSSGGRNNNGRV and NASI…KKKG. Over residues 36 to 49 the composition is skewed to low complexity; that stretch reads GKSSSGGRNNNGRV. Residues 209 to 220 show a composition bias toward basic residues; the sequence is GRSRWLGRRPHN.

The protein belongs to the universal ribosomal protein uL2 family. Part of the 50S ribosomal subunit. Forms a bridge to the 30S subunit in the 70S ribosome.

Functionally, one of the primary rRNA binding proteins. Required for association of the 30S and 50S subunits to form the 70S ribosome, for tRNA binding and peptide bond formation. It has been suggested to have peptidyltransferase activity; this is somewhat controversial. Makes several contacts with the 16S rRNA in the 70S ribosome. This is Large ribosomal subunit protein uL2 from Beijerinckia indica subsp. indica (strain ATCC 9039 / DSM 1715 / NCIMB 8712).